We begin with the raw amino-acid sequence, 104 residues long: Large ribosomal subunit protein uL24 (104 aa).

This sequence belongs to the universal ribosomal protein uL24 family. Part of the 50S ribosomal subunit.

In terms of biological role, one of two assembly initiator proteins, it binds directly to the 5'-end of the 23S rRNA, where it nucleates assembly of the 50S subunit. Its function is as follows. One of the proteins that surrounds the polypeptide exit tunnel on the outside of the subunit. The polypeptide is Large ribosomal subunit protein uL24 (Flavobacterium psychrophilum (strain ATCC 49511 / DSM 21280 / CIP 103535 / JIP02/86)).